A 2199-amino-acid polypeptide reads, in one-letter code: DNA polymerase epsilon catalytic subunit A (2199 aa).

Zn(2+)-binding residues include cysteine 2069, cysteine 2072, cysteine 2104, and cysteine 2107. The CysA-type zinc finger occupies 2069–2107 (CKQCGVHQDFDLCLHEHLWPTRDDMGTLVFSDGWSCSSC). [4Fe-4S] cluster contacts are provided by cysteine 2138, cysteine 2141, cysteine 2153, and cysteine 2155. Positions 2138–2155 (CSKCKTVKQWSLKERCSC) match the CysB motif motif.

It belongs to the DNA polymerase type-B family. In terms of assembly, heterotetramer. Consists of 4 subunits: pol2, dpb2, dpb3 and dpb4. Requires [4Fe-4S] cluster as cofactor.

It localises to the nucleus. It catalyses the reaction DNA(n) + a 2'-deoxyribonucleoside 5'-triphosphate = DNA(n+1) + diphosphate. DNA polymerase II participates in chromosomal DNA replication. In Schizosaccharomyces pombe (strain 972 / ATCC 24843) (Fission yeast), this protein is DNA polymerase epsilon catalytic subunit A (pol2).